The chain runs to 474 residues: Trehalose-6-phosphate synthase (474 aa).

Arg10 lines the D-glucose 6-phosphate pocket. Gly22–Gly23 provides a ligand contact to UDP-alpha-D-glucose. Tyr77 and Asp131 together coordinate D-glucose 6-phosphate. UDP-alpha-D-glucose-binding residues include Arg263 and Lys268. D-glucose 6-phosphate is bound at residue Arg301. UDP-alpha-D-glucose is bound by residues Phe340 and Leu366–Glu370.

Belongs to the glycosyltransferase 20 family. In terms of assembly, homotetramer.

It catalyses the reaction D-glucose 6-phosphate + UDP-alpha-D-glucose = alpha,alpha-trehalose 6-phosphate + UDP + H(+). Its pathway is glycan biosynthesis; trehalose biosynthesis. Functionally, probably involved in the osmoprotection via the biosynthesis of trehalose. Catalyzes the transfer of glucose from UDP-alpha-D-glucose (UDP-Glc) to D-glucose 6-phosphate (Glc-6-P) to form trehalose-6-phosphate. Acts with retention of the anomeric configuration of the UDP-sugar donor. This Cronobacter sakazakii (strain ATCC BAA-894) (Enterobacter sakazakii) protein is Trehalose-6-phosphate synthase.